The sequence spans 343 residues: DNA-directed RNA polymerase subunit alpha (343 aa).

Residues 1-239 (MGETVTIQKN…DQLNVFVNFE (239 aa)) form an alpha N-terminal domain (alpha-NTD) region. Positions 255 to 343 (FNPAFLKKVD…ELAKRFEDHY (89 aa)) are alpha C-terminal domain (alpha-CTD).

This sequence belongs to the RNA polymerase alpha chain family. In terms of assembly, homodimer. The RNAP catalytic core consists of 2 alpha, 1 beta, 1 beta' and 1 omega subunit. When a sigma factor is associated with the core the holoenzyme is formed, which can initiate transcription.

It carries out the reaction RNA(n) + a ribonucleoside 5'-triphosphate = RNA(n+1) + diphosphate. Its function is as follows. DNA-dependent RNA polymerase catalyzes the transcription of DNA into RNA using the four ribonucleoside triphosphates as substrates. The chain is DNA-directed RNA polymerase subunit alpha from Bradyrhizobium diazoefficiens (strain JCM 10833 / BCRC 13528 / IAM 13628 / NBRC 14792 / USDA 110).